The chain runs to 402 residues: Argininosuccinate synthase (402 aa).

ATP contacts are provided by residues 10-18 (AYSGGLDTS) and Ala38. Tyr90 lines the L-citrulline pocket. Gly120 serves as a coordination point for ATP. Residues Thr122, Asn126, and Asp127 each contribute to the L-aspartate site. Asn126 is an L-citrulline binding site. Residues Arg130, Ser179, Ser188, Glu264, and Tyr276 each coordinate L-citrulline.

The protein belongs to the argininosuccinate synthase family. Type 1 subfamily. As to quaternary structure, homotetramer.

It is found in the cytoplasm. It catalyses the reaction L-citrulline + L-aspartate + ATP = 2-(N(omega)-L-arginino)succinate + AMP + diphosphate + H(+). Its pathway is amino-acid biosynthesis; L-arginine biosynthesis; L-arginine from L-ornithine and carbamoyl phosphate: step 2/3. In Psychromonas ingrahamii (strain DSM 17664 / CCUG 51855 / 37), this protein is Argininosuccinate synthase.